Consider the following 180-residue polypeptide: Oligoribonuclease (180 aa).

Residues 7–170 form the Exonuclease domain; that stretch reads LIWIDLEMTG…DDIRESIAEL (164 aa). Tyrosine 128 is an active-site residue.

Belongs to the oligoribonuclease family.

The protein resides in the cytoplasm. 3'-to-5' exoribonuclease specific for small oligoribonucleotides. This chain is Oligoribonuclease, found in Pseudomonas entomophila (strain L48).